The sequence spans 207 residues: ATP-dependent Clp protease proteolytic subunit (207 aa).

Ser-111 (nucleophile) is an active-site residue. His-136 is an active-site residue.

The protein belongs to the peptidase S14 family. Fourteen ClpP subunits assemble into 2 heptameric rings which stack back to back to give a disk-like structure with a central cavity, resembling the structure of eukaryotic proteasomes. Component of the ClpAP and ClpXP complexes.

It is found in the cytoplasm. It carries out the reaction Hydrolysis of proteins to small peptides in the presence of ATP and magnesium. alpha-casein is the usual test substrate. In the absence of ATP, only oligopeptides shorter than five residues are hydrolyzed (such as succinyl-Leu-Tyr-|-NHMec, and Leu-Tyr-Leu-|-Tyr-Trp, in which cleavage of the -Tyr-|-Leu- and -Tyr-|-Trp bonds also occurs).. Cleaves peptides in various proteins in a process that requires ATP hydrolysis. Has a chymotrypsin-like activity. Plays a major role in the degradation of misfolded proteins. This is ATP-dependent Clp protease proteolytic subunit from Salmonella enteritidis PT4 (strain P125109).